The following is a 242-amino-acid chain: Cytochrome c oxidase subunit 2 (242 aa).

Residues 7–33 (DVPVPYGLYFQDSATPTFDGIIELHDI) lie on the Mitochondrial intermembrane side of the membrane. A helical membrane pass occupies residues 34 to 55 (VMFYIVVTIVLVSYLLFVIIKN). At 56-73 (FSNDHISYKYLTHGTTLE) the chain is on the mitochondrial matrix side. A helical transmembrane segment spans residues 74–98 (IVWTIFPVVILLFIAFPSFILLYLC). Residues 99–242 (DEVIDPAMTI…DKFLSWLDEQ (144 aa)) lie on the Mitochondrial intermembrane side of the membrane. Cu cation-binding residues include His177, Cys212, Glu214, Cys216, His220, and Met223. Glu214 contacts Mg(2+).

Belongs to the cytochrome c oxidase subunit 2 family. In terms of assembly, component of the cytochrome c oxidase (complex IV, CIV), a multisubunit enzyme composed of a catalytic core of 3 subunits and several supernumerary subunits. The complex exists as a monomer or a dimer and forms supercomplexes (SCs) in the inner mitochondrial membrane with ubiquinol-cytochrome c oxidoreductase (cytochrome b-c1 complex, complex III, CIII). It depends on Cu cation as a cofactor. Post-translationally, the signal sequence of COX2 is processed by IMP1.

The protein localises to the mitochondrion inner membrane. It carries out the reaction 4 Fe(II)-[cytochrome c] + O2 + 8 H(+)(in) = 4 Fe(III)-[cytochrome c] + 2 H2O + 4 H(+)(out). Its function is as follows. Component of the cytochrome c oxidase, the last enzyme in the mitochondrial electron transport chain which drives oxidative phosphorylation. The respiratory chain contains 3 multisubunit complexes succinate dehydrogenase (complex II, CII), ubiquinol-cytochrome c oxidoreductase (cytochrome b-c1 complex, complex III, CIII) and cytochrome c oxidase (complex IV, CIV), that cooperate to transfer electrons derived from NADH and succinate to molecular oxygen, creating an electrochemical gradient over the inner membrane that drives transmembrane transport and the ATP synthase. Cytochrome c oxidase is the component of the respiratory chain that catalyzes the reduction of oxygen to water. Electrons originating from reduced cytochrome c in the intermembrane space (IMS) are transferred via the dinuclear copper A center (CU(A)) of subunit 2 and heme A of subunit 1 to the active site in subunit 1, a binuclear center (BNC) formed by heme A3 and copper B (CU(B)). The BNC reduces molecular oxygen to 2 water molecules using 4 electrons from cytochrome c in the IMS and 4 protons from the mitochondrial matrix. The polypeptide is Cytochrome c oxidase subunit 2 (COX2) (Yarrowia lipolytica (strain CLIB 122 / E 150) (Yeast)).